The primary structure comprises 418 residues: MGDKGTRVFKKASPNGKLTVYLGKRDFVDHIDLVDPVDGVVLVDPEYLKERRVYVTLTCAFRYGREDLDVLGLTFRKDLFVANVQSFPPAPEDKKPLTRLQERLIKKLGEHAYPFTFEIPPNLPCSVTLQPGPEDTGKACGVDYEVKAFCAENLEEKIHKRNSVRLVIRKVQYAPERPGPQPTAETTRQFLMSDKPLHLEASLDKEIYYHGEPISVNVHVTNNTNKTVKKIKISVRQYADICLFNTAQYKCPVAMEEADDTVAPSSTFCKVYTLTPFLANNREKRGLALDGKLKHEDTNLASSTLLREGANREILGIIVSYKVKVKLVVSRGGLLGDLASSDVAVELPFTLMHPKPKEEPPHREVPESETPVDTNLIELDTNDDDIVFEDFARQRLKGMKDDKDEEDDGTGSPHLNNR.

The tract at residues M1 to S163 is interaction with SRC. The tract at residues P45–S86 is interaction with CHRM2. Y47 carries the phosphotyrosine modification. The 1D-myo-inositol hexakisphosphate site is built by K250, M255, K324, and K326. Residues I318 to R418 are interaction with TRAF6. Disordered stretches follow at residues H353–T374 and K397–R418. Residues K355–P366 show a composition bias toward basic and acidic residues. Phosphoserine is present on S412. S412 carries the phosphoserine; by GRK5 modification.

Belongs to the arrestin family. In terms of assembly, monomer. Homodimer. Homooligomer; the self-association is mediated by InsP6-binding. Heterooligomer with ARRB2; the association is mediated by InsP6-binding. Interacts with ADRB2 (phosphorylated). Interacts with CHRM2 (phosphorylated). Interacts with LHCGR. Interacts with CYTH2 and CASR. Interacts with AP2B1 (dephosphorylated at 'Tyr-737'); phosphorylation of AP2B1 at 'Tyr-737' disrupts the interaction. Interacts (dephosphorylated at Ser-412) with CLTC. Interacts with CCR2 and GRK2. Interacts with CRR5. Interacts with PTAFR (phosphorylated on serine residues). Interacts with CLTC and MAP2K3. Interacts with CREB1. Interacts with TRAF6. Interacts with IGF1R and MDM2. Interacts with C5AR1. Interacts with PDE4D. Interacts with SRC (via the SH3 domain and the protein kinase domain); the interaction is independent of the phosphorylation state of SRC C-terminus. Interacts with TACR1. Interacts with RAF1. Interacts with CHUK, IKBKB and MAP3K14. Interacts with DVL1; the interaction is enhanced by phosphorylation of DVL1. Interacts with DVL2; the interaction is enhanced by phosphorylation of DVL2. Interacts with IGF1R. Associates with MAP kinase p38. Part of a MAPK signaling complex consisting of TACR1, ARRB1, SRC, MAPK1 (activated) and MAPK3 (activated). Part of a MAPK signaling complex consisting of F2RL1, ARRB1, RAF1, MAPK1 (activated) and MAPK3 (activated). Interacts with GPR143. Interacts with MAP2K4/MKK4. Interacts with HCK and CXCR1 (phosphorylated). Interacts with ACKR3 and ACKR4. Interacts with ARRDC1; the interaction is direct. Interacts with GPR61, GPR62 and GPR135. Constitutively phosphorylated at Ser-412 in the cytoplasm. At the plasma membrane, is rapidly dephosphorylated, a process that is required for clathrin binding and beta-2 adrenergic receptor/ADRB2 endocytosis but not for ADRB2 binding and desensitization. Once internalized, is rephosphorylated. Post-translationally, the ubiquitination status appears to regulate the formation and trafficking of beta-arrestin-GPCR complexes and signaling. Ubiquitination appears to occur GPCR-specific. Ubiquitinated by MDM2; the ubiquitination is required for rapid internalization of ADRB2. Deubiquitinated by USP33; the deubiquitination leads to a dissociation of the beta-arrestin-GPCR complex. Stimulation of a class A GPCR, such as ADRB2, induces transient ubiquitination and subsequently promotes association with USP33. In terms of tissue distribution, predominantly localized in neuronal tissues and in the spleen.

The protein resides in the cytoplasm. Its subcellular location is the nucleus. It localises to the cell membrane. It is found in the membrane. The protein localises to the clathrin-coated pit. The protein resides in the cell projection. Its subcellular location is the pseudopodium. It localises to the cytoplasmic vesicle. Functions in regulating agonist-mediated G-protein coupled receptor (GPCR) signaling by mediating both receptor desensitization and resensitization processes. During homologous desensitization, beta-arrestins bind to the GPRK-phosphorylated receptor and sterically preclude its coupling to the cognate G-protein; the binding appears to require additional receptor determinants exposed only in the active receptor conformation. The beta-arrestins target many receptors for internalization by acting as endocytic adapters (CLASPs, clathrin-associated sorting proteins) and recruiting the GPRCs to the adapter protein 2 complex 2 (AP-2) in clathrin-coated pits (CCPs). However, the extent of beta-arrestin involvement appears to vary significantly depending on the receptor, agonist and cell type. Internalized arrestin-receptor complexes traffic to intracellular endosomes, where they remain uncoupled from G-proteins. Two different modes of arrestin-mediated internalization occur. Class A receptors, like ADRB2, OPRM1, ENDRA, D1AR and ADRA1B dissociate from beta-arrestin at or near the plasma membrane and undergo rapid recycling. Class B receptors, like AVPR2, AGTR1, NTSR1, TRHR and TACR1 internalize as a complex with arrestin and traffic with it to endosomal vesicles, presumably as desensitized receptors, for extended periods of time. Receptor resensitization then requires that receptor-bound arrestin is removed so that the receptor can be dephosphorylated and returned to the plasma membrane. Involved in internalization of P2RY4 and UTP-stimulated internalization of P2RY2. Involved in phosphorylation-dependent internalization of OPRD1 ands subsequent recycling. Involved in the degradation of cAMP by recruiting cAMP phosphodiesterases to ligand-activated receptors. Beta-arrestins function as multivalent adapter proteins that can switch the GPCR from a G-protein signaling mode that transmits short-lived signals from the plasma membrane via small molecule second messengers and ion channels to a beta-arrestin signaling mode that transmits a distinct set of signals that are initiated as the receptor internalizes and transits the intracellular compartment. Acts as a signaling scaffold for MAPK pathways such as MAPK1/3 (ERK1/2). ERK1/2 activated by the beta-arrestin scaffold is largely excluded from the nucleus and confined to cytoplasmic locations such as endocytic vesicles, also called beta-arrestin signalosomes. Recruits c-Src/SRC to ADRB2 resulting in ERK activation. GPCRs for which the beta-arrestin-mediated signaling relies on both ARRB1 and ARRB2 (codependent regulation) include ADRB2, F2RL1 and PTH1R. For some GPCRs the beta-arrestin-mediated signaling relies on either ARRB1 or ARRB2 and is inhibited by the other respective beta-arrestin form (reciprocal regulation). Inhibits ERK1/2 signaling in AGTR1- and AVPR2-mediated activation (reciprocal regulation). Is required for SP-stimulated endocytosis of NK1R and recruits c-Src/SRC to internalized NK1R resulting in ERK1/2 activation, which is required for the antiapoptotic effects of SP. Is involved in proteinase-activated F2RL1-mediated ERK activity. Acts as a signaling scaffold for the AKT1 pathway. Is involved in alpha-thrombin-stimulated AKT1 signaling. Is involved in IGF1-stimulated AKT1 signaling leading to increased protection from apoptosis. Involved in activation of the p38 MAPK signaling pathway and in actin bundle formation. Involved in F2RL1-mediated cytoskeletal rearrangement and chemotaxis. Involved in AGTR1-mediated stress fiber formation by acting together with GNAQ to activate RHOA. Appears to function as signaling scaffold involved in regulation of MIP-1-beta-stimulated CCR5-dependent chemotaxis. Involved in attenuation of NF-kappa-B-dependent transcription in response to GPCR or cytokine stimulation by interacting with and stabilizing CHUK. May serve as nuclear messenger for GPCRs. Involved in OPRD1-stimulated transcriptional regulation by translocating to CDKN1B and FOS promoter regions and recruiting EP300 resulting in acetylation of histone H4. Involved in regulation of LEF1 transcriptional activity via interaction with DVL1 and/or DVL2 Also involved in regulation of receptors other than GPCRs. Involved in Toll-like receptor and IL-1 receptor signaling through the interaction with TRAF6 which prevents TRAF6 autoubiquitination and oligomerization required for activation of NF-kappa-B and JUN. Binds phosphoinositides. Binds inositolhexakisphosphate (InsP6). Involved in IL8-mediated granule release in neutrophils. Required for atypical chemokine receptor ACKR2-induced RAC1-LIMK1-PAK1-dependent phosphorylation of cofilin (CFL1) and for the up-regulation of ACKR2 from endosomal compartment to cell membrane, increasing its efficiency in chemokine uptake and degradation. Involved in the internalization of the atypical chemokine receptor ACKR3. Negatively regulates the NOTCH signaling pathway by mediating the ubiquitination and degradation of NOTCH1 by ITCH. Participates in the recruitment of the ubiquitin-protein ligase to the receptor. The sequence is that of Beta-arrestin-1 from Rattus norvegicus (Rat).